Consider the following 315-residue polypeptide: 4-hydroxy-3-methylbut-2-enyl diphosphate reductase (315 aa).

[4Fe-4S] cluster is bound at residue Cys12. Residues His41 and His74 each contribute to the (2E)-4-hydroxy-3-methylbut-2-enyl diphosphate site. Dimethylallyl diphosphate is bound by residues His41 and His74. Isopentenyl diphosphate contacts are provided by His41 and His74. Cys96 is a binding site for [4Fe-4S] cluster. His124 lines the (2E)-4-hydroxy-3-methylbut-2-enyl diphosphate pocket. His124 contacts dimethylallyl diphosphate. Residue His124 coordinates isopentenyl diphosphate. Catalysis depends on Glu126, which acts as the Proton donor. A (2E)-4-hydroxy-3-methylbut-2-enyl diphosphate-binding site is contributed by Thr168. Cys198 is a [4Fe-4S] cluster binding site. Residues Ser226, Ser227, Asn228, and Ser270 each contribute to the (2E)-4-hydroxy-3-methylbut-2-enyl diphosphate site. The dimethylallyl diphosphate site is built by Ser226, Ser227, Asn228, and Ser270. Positions 226, 227, 228, and 270 each coordinate isopentenyl diphosphate.

The protein belongs to the IspH family. Requires [4Fe-4S] cluster as cofactor.

It catalyses the reaction isopentenyl diphosphate + 2 oxidized [2Fe-2S]-[ferredoxin] + H2O = (2E)-4-hydroxy-3-methylbut-2-enyl diphosphate + 2 reduced [2Fe-2S]-[ferredoxin] + 2 H(+). The enzyme catalyses dimethylallyl diphosphate + 2 oxidized [2Fe-2S]-[ferredoxin] + H2O = (2E)-4-hydroxy-3-methylbut-2-enyl diphosphate + 2 reduced [2Fe-2S]-[ferredoxin] + 2 H(+). It functions in the pathway isoprenoid biosynthesis; dimethylallyl diphosphate biosynthesis; dimethylallyl diphosphate from (2E)-4-hydroxy-3-methylbutenyl diphosphate: step 1/1. Its pathway is isoprenoid biosynthesis; isopentenyl diphosphate biosynthesis via DXP pathway; isopentenyl diphosphate from 1-deoxy-D-xylulose 5-phosphate: step 6/6. In terms of biological role, catalyzes the conversion of 1-hydroxy-2-methyl-2-(E)-butenyl 4-diphosphate (HMBPP) into a mixture of isopentenyl diphosphate (IPP) and dimethylallyl diphosphate (DMAPP). Acts in the terminal step of the DOXP/MEP pathway for isoprenoid precursor biosynthesis. This chain is 4-hydroxy-3-methylbut-2-enyl diphosphate reductase, found in Pseudomonas putida (strain GB-1).